We begin with the raw amino-acid sequence, 1033 residues long: uncharacterized protein (1033 aa).

4 coiled-coil regions span residues 212–326 (EIFK…KMNN), 405–582 (ILNN…LYKF), 615–771 (LEKE…LKLN), and 797–1019 (KMKI…NIDN).

This is an uncharacterized protein from Plasmodium falciparum (isolate 3D7).